Here is a 200-residue protein sequence, read N- to C-terminus: ATP-dependent Clp protease proteolytic subunit 3 (200 aa).

Ser-101 serves as the catalytic Nucleophile. His-126 is an active-site residue.

It belongs to the peptidase S14 family. Fourteen ClpP subunits assemble into 2 heptameric rings which stack back to back to give a disk-like structure with a central cavity, resembling the structure of eukaryotic proteasomes.

The protein localises to the cytoplasm. It carries out the reaction Hydrolysis of proteins to small peptides in the presence of ATP and magnesium. alpha-casein is the usual test substrate. In the absence of ATP, only oligopeptides shorter than five residues are hydrolyzed (such as succinyl-Leu-Tyr-|-NHMec, and Leu-Tyr-Leu-|-Tyr-Trp, in which cleavage of the -Tyr-|-Leu- and -Tyr-|-Trp bonds also occurs).. Cleaves peptides in various proteins in a process that requires ATP hydrolysis. Has a chymotrypsin-like activity. Plays a major role in the degradation of misfolded proteins. In Synechococcus sp. (strain CC9902), this protein is ATP-dependent Clp protease proteolytic subunit 3.